Reading from the N-terminus, the 186-residue chain is Serine hydrolase RBBP9 (186 aa).

The segment at 56–70 is retinoblastoma protein binding; the sequence is LPFMETELHCDEKTI. An involved in binding to RB1 region spans residues 63 to 67; the sequence is LHCDE. Catalysis depends on charge relay system residues Ser-75, Asp-138, and His-165.

It belongs to the RBBP9 family. In terms of assembly, interacts with RB1; the interaction disrupts RB1 binding to E2F1. Interacts with RBL1 and RBL2. As to expression, expressed in spleen.

The enzyme catalyses valacyclovir + H2O = acyclovir + L-valine + H(+). In terms of biological role, serine hydrolase. Catalyzes the hydrolytic activation of amino acid ester of the antiviral prodrug valacyclovir to its corresponding active drug, acyclovir. May negatively regulate basal or autocrine TGF-beta signaling by suppressing SMAD2-SMAD3 phosphorylation. May play a role in the transformation process due to its capacity to confer resistance to the growth-inhibitory effects of TGF-beta through interaction with RB1 and the subsequent displacement of E2F1. This is Serine hydrolase RBBP9 (Rbbp9) from Mus musculus (Mouse).